A 226-amino-acid polypeptide reads, in one-letter code: Leucyl/phenylalanyl-tRNA--protein transferase (226 aa).

It belongs to the L/F-transferase family.

It localises to the cytoplasm. The catalysed reaction is N-terminal L-lysyl-[protein] + L-leucyl-tRNA(Leu) = N-terminal L-leucyl-L-lysyl-[protein] + tRNA(Leu) + H(+). It carries out the reaction N-terminal L-arginyl-[protein] + L-leucyl-tRNA(Leu) = N-terminal L-leucyl-L-arginyl-[protein] + tRNA(Leu) + H(+). It catalyses the reaction L-phenylalanyl-tRNA(Phe) + an N-terminal L-alpha-aminoacyl-[protein] = an N-terminal L-phenylalanyl-L-alpha-aminoacyl-[protein] + tRNA(Phe). In terms of biological role, functions in the N-end rule pathway of protein degradation where it conjugates Leu, Phe and, less efficiently, Met from aminoacyl-tRNAs to the N-termini of proteins containing an N-terminal arginine or lysine. The protein is Leucyl/phenylalanyl-tRNA--protein transferase of Bradyrhizobium diazoefficiens (strain JCM 10833 / BCRC 13528 / IAM 13628 / NBRC 14792 / USDA 110).